We begin with the raw amino-acid sequence, 474 residues long: Magnesium transporter MRS2-A, chloroplastic (474 aa).

Residues 1-55 (MASVSSSPSYSSQAAVLLLLHQPPHQHGHGGACLRYRGSQSQGRGNAVATSLGLS) constitute a chloroplast transit peptide. The segment at 79–129 (GKDGRAVTKDEEEEAAAAAVEEEGEVEVRREEDKPGDDGSREAAARGSGSG) is disordered. Residues 88 to 103 (DEEEEAAAAAVEEEGE) show a composition bias toward acidic residues. Positions 104–122 (VEVRREEDKPGDDGSREAA) are enriched in basic and acidic residues. The next 2 helical transmembrane spans lie at 412 to 432 (LLLQVGTFCVAIGALIAGIFG) and 444 to 464 (WAFWATTGGIVVGAVAGFFIM). The Required for magnesium transport activity motif lies at 432-434 (GMN).

Belongs to the CorA metal ion transporter (MIT) (TC 1.A.35.5) family.

The protein localises to the plastid. It is found in the chloroplast membrane. Functionally, magnesium transporter that may mediate the influx of magnesium in chloroplast. The protein is Magnesium transporter MRS2-A, chloroplastic (MRS2-A) of Oryza sativa subsp. japonica (Rice).